The following is a 323-amino-acid chain: Cytochrome c biogenesis protein CcsA (323 aa).

8 helical membrane-spanning segments follow: residues 9-29 (ILTH…LLNL), 45-62 (MMAT…RWIY), 71-91 (LYES…VPYF), 98-118 (LSAI…SGLL), 143-163 (MLLG…LLVI), 227-247 (IISL…VWAN), 261-275 (TWAF…IYLH), and 285-305 (VGPA…YFGV).

Belongs to the CcmF/CycK/Ccl1/NrfE/CcsA family. In terms of assembly, may interact with Ccs1.

It localises to the plastid. The protein localises to the chloroplast thylakoid membrane. Required during biogenesis of c-type cytochromes (cytochrome c6 and cytochrome f) at the step of heme attachment. The polypeptide is Cytochrome c biogenesis protein CcsA (Calycanthus floridus var. glaucus (Eastern sweetshrub)).